Consider the following 560-residue polypeptide: Oxygen-dependent choline dehydrogenase (560 aa).

6 to 35 is a binding site for FAD; that stretch reads DYIIIGGGSAGSVLGGRLSEDVSNNVLVLE. The active-site Proton acceptor is the His-472.

It belongs to the GMC oxidoreductase family. FAD serves as cofactor.

It carries out the reaction choline + A = betaine aldehyde + AH2. It catalyses the reaction betaine aldehyde + NAD(+) + H2O = glycine betaine + NADH + 2 H(+). The protein operates within amine and polyamine biosynthesis; betaine biosynthesis via choline pathway; betaine aldehyde from choline (cytochrome c reductase route): step 1/1. Involved in the biosynthesis of the osmoprotectant glycine betaine. Catalyzes the oxidation of choline to betaine aldehyde and betaine aldehyde to glycine betaine at the same rate. This is Oxygen-dependent choline dehydrogenase from Staphylococcus xylosus.